The primary structure comprises 325 residues: Homoserine O-succinyltransferase (325 aa).

The active-site Acyl-thioester intermediate is the C142. Substrate contacts are provided by K163 and S191. H234 serves as the catalytic Proton acceptor. The active site involves E236. Position 248 (R248) interacts with substrate.

Belongs to the MetA family.

It localises to the cytoplasm. The catalysed reaction is L-homoserine + succinyl-CoA = O-succinyl-L-homoserine + CoA. Its pathway is amino-acid biosynthesis; L-methionine biosynthesis via de novo pathway; O-succinyl-L-homoserine from L-homoserine: step 1/1. Functionally, transfers a succinyl group from succinyl-CoA to L-homoserine, forming succinyl-L-homoserine. This is Homoserine O-succinyltransferase from Bradyrhizobium japonicum.